Reading from the N-terminus, the 639-residue chain is Chaperone protein DnaK (639 aa).

Thr-195 carries the post-translational modification Phosphothreonine; by autocatalysis. Residues 601-618 (NAAAGAAPAGEPAPGEPQ) are compositionally biased toward low complexity. The segment at 601-639 (NAAAGAAPAGEPAPGEPQAEQKKDDGVIDAEYVDVDEKK) is disordered. Residues 627–639 (VIDAEYVDVDEKK) show a composition bias toward acidic residues.

It belongs to the heat shock protein 70 family.

Functionally, acts as a chaperone. In Acidobacterium capsulatum (strain ATCC 51196 / DSM 11244 / BCRC 80197 / JCM 7670 / NBRC 15755 / NCIMB 13165 / 161), this protein is Chaperone protein DnaK.